We begin with the raw amino-acid sequence, 240 residues long: 31 kDa outer-membrane immunogenic protein (240 aa).

Positions 1–19 (MKSVILASIAAMFATSAMA) are cleaved as a signal peptide. The epitope recognized by the monoclonal antibody A59/10F09/G10 stretch occupies residues 48–83 (NAGYAGGKFKHPFSSFDKEDNEQVSGSLDVTAGGFV).

This sequence belongs to the Omp25/RopB family. As to quaternary structure, oligomeric.

The protein localises to the cell outer membrane. Its function is as follows. Major outer membrane protein associated with peptidoglycans. May function as a porin. This chain is 31 kDa outer-membrane immunogenic protein (omp31), found in Brucella melitensis biotype 1 (strain ATCC 23456 / CCUG 17765 / NCTC 10094 / 16M).